A 366-amino-acid chain; its full sequence is Mitochondrial substrate carrier family protein H (366 aa).

Positions 1-25 are enriched in low complexity; the sequence is MLSNSVNNNNNNNNINNSNSNNNDS. Positions 1–26 are disordered; sequence MLSNSVNNNNNNNNINNSNSNNNDSN. Solcar repeat units lie at residues 29 to 121, 132 to 243, and 259 to 360; these read KNVK…LKEY, NIYT…LKNK, and SPFF…IKQS. 6 helical membrane-spanning segments follow: residues 35-55, 96-112, 133-151, 175-192, 262-282, and 340-357; these read MVAS…LDVV, GVTP…TIYF, IYTV…SASV, VAMA…IPLS, FINF…TTPI, and VAKV…FEYI.

It belongs to the mitochondrial carrier (TC 2.A.29) family.

Its subcellular location is the mitochondrion inner membrane. Mitochondrial transporter required for glutathione import into mitochondria. This is Mitochondrial substrate carrier family protein H from Dictyostelium discoideum (Social amoeba).